Consider the following 242-residue polypeptide: 1-(5-phosphoribosyl)-5-[(5-phosphoribosylamino)methylideneamino] imidazole-4-carboxamide isomerase (242 aa).

Aspartate 10 (proton acceptor) is an active-site residue. Catalysis depends on aspartate 131, which acts as the Proton donor.

Belongs to the HisA/HisF family.

The protein resides in the cytoplasm. It catalyses the reaction 1-(5-phospho-beta-D-ribosyl)-5-[(5-phospho-beta-D-ribosylamino)methylideneamino]imidazole-4-carboxamide = 5-[(5-phospho-1-deoxy-D-ribulos-1-ylimino)methylamino]-1-(5-phospho-beta-D-ribosyl)imidazole-4-carboxamide. It functions in the pathway amino-acid biosynthesis; L-histidine biosynthesis; L-histidine from 5-phospho-alpha-D-ribose 1-diphosphate: step 4/9. The sequence is that of 1-(5-phosphoribosyl)-5-[(5-phosphoribosylamino)methylideneamino] imidazole-4-carboxamide isomerase from Bifidobacterium animalis subsp. lactis (strain AD011).